A 453-amino-acid chain; its full sequence is uncharacterized protein (453 aa).

Cys-74, Cys-80, Cys-83, and Cys-162 together coordinate [4Fe-4S] cluster. Residues Gln-286, Tyr-315, Glu-336, and Asp-384 each coordinate S-adenosyl-L-methionine. Cys-411 functions as the Nucleophile in the catalytic mechanism.

This sequence belongs to the class I-like SAM-binding methyltransferase superfamily. RNA M5U methyltransferase family.

This is an uncharacterized protein from Staphylococcus aureus (strain MRSA252).